The primary structure comprises 955 residues: Glycine dehydrogenase (decarboxylating) (955 aa).

Position 702 is an N6-(pyridoxal phosphate)lysine (Lys-702).

The protein belongs to the GcvP family. As to quaternary structure, the glycine cleavage system is composed of four proteins: P, T, L and H. Requires pyridoxal 5'-phosphate as cofactor.

The enzyme catalyses N(6)-[(R)-lipoyl]-L-lysyl-[glycine-cleavage complex H protein] + glycine + H(+) = N(6)-[(R)-S(8)-aminomethyldihydrolipoyl]-L-lysyl-[glycine-cleavage complex H protein] + CO2. Its function is as follows. The glycine cleavage system catalyzes the degradation of glycine. The P protein binds the alpha-amino group of glycine through its pyridoxal phosphate cofactor; CO(2) is released and the remaining methylamine moiety is then transferred to the lipoamide cofactor of the H protein. This is Glycine dehydrogenase (decarboxylating) from Stenotrophomonas maltophilia (strain R551-3).